The sequence spans 382 residues: Pyrimidine monooxygenase RutA (382 aa).

FMN is bound by residues 68–69 (IK), Asn134, Glu143, 159–160 (RY), and Ser209.

It belongs to the NtaA/SnaA/DszA monooxygenase family. RutA subfamily.

It carries out the reaction uracil + FMNH2 + NADH + O2 = (Z)-3-ureidoacrylate + FMN + NAD(+) + H2O + H(+). It catalyses the reaction thymine + FMNH2 + NADH + O2 = (Z)-2-methylureidoacrylate + FMN + NAD(+) + H2O + H(+). Catalyzes the pyrimidine ring opening between N-3 and C-4 by an unusual flavin hydroperoxide-catalyzed mechanism, adding oxygen atoms in the process to yield ureidoacrylate peracid, that immediately reacts with FMN forming ureidoacrylate and FMN-N(5)-oxide. The FMN-N(5)-oxide reacts spontaneously with NADH to produce FMN. Requires the flavin reductase RutF to regenerate FMN in vivo. The polypeptide is Pyrimidine monooxygenase RutA (Escherichia coli O45:K1 (strain S88 / ExPEC)).